Consider the following 244-residue polypeptide: MDILVPLLQLLVLLLTLPLHLMALLGCWQPLCKSYFPYLMAVLTPKSNRKMESKKRELFSQIKGLTGASGKVALLELGCGTGANFQFYPPGCRVTCLDPNPHFEKFLTKSMAENRHLQYERFVVAPGEDMRQLADGSMDVVVCTLVLCSVQSPRKVLQEVRRVLRPGGVLFFWEHVAEPYGSWAFMWQQVFEPTWKHIGDGCCLTRETWKDLENAQFSEIQMERQPPPLKWLPVGPHIMGKAVK.

The N-terminal stretch at 1–23 is a signal peptide; the sequence is MDILVPLLQLLVLLLTLPLHLMA.

It belongs to the methyltransferase superfamily. Expressed in the liver.

The protein resides in the endoplasmic reticulum membrane. The protein localises to the lipid droplet. It localises to the microsome. It is found in the cytoplasm. Its subcellular location is the cytosol. It catalyses the reaction a thiol + S-adenosyl-L-methionine = a methyl thioether + S-adenosyl-L-homocysteine + H(+). Functionally, thiol S-methyltransferase that catalyzes the transfer of a methyl group from S-adenosyl-L-methionine to alkyl and phenolic thiol-containing acceptor substrates. Together with TMT1B accounts for most of S-thiol methylation activity in the endoplasmic reticulum of hepatocytes. Selectively methylates S-centered nucleophiles from metabolites such as hydrogen sulfide and dithiothreitol. The polypeptide is Thiol S-methyltransferase TMT1B (Homo sapiens (Human)).